The chain runs to 607 residues: Bifunctional endo-1,4-beta-xylanase A (607 aa).

A signal peptide spans 1–18; the sequence is MRTIKFFFAVAIATVAKA. A GH11 1 domain is found at 35–242; the sequence is NGQTQHKGVA…SSGIADVTKL (208 aa). E141 (nucleophile) is an active-site residue. The active-site Proton donor is the E223. Polar residues predominate over residues 248–272; it reads QKGSNPAPTSTGTVPSSSAGGSTAN. The segment at 248–284 is disordered; it reads QKGSNPAPTSTGTVPSSSAGGSTANGKKFTVGNGQNQ. Positions 280–487 constitute a GH11 2 domain; sequence NGQNQHKGVN…SSGVADVTLL (208 aa). The active-site Nucleophile is E386. E474 (proton donor) is an active-site residue. The tract at residues 493–514 is disordered; it reads PKGSSPATSAAPRTTTRTTTRT. The span at 496–514 shows a compositional bias: low complexity; sequence SSPATSAAPRTTTRTTTRT. CBM10 domains follow at residues 523–563 and 566–606; these read KCSA…CGCG and QCSS…CGCG.

The protein belongs to the glycosyl hydrolase 11 (cellulase G) family.

It catalyses the reaction Endohydrolysis of (1-&gt;4)-beta-D-xylosidic linkages in xylans.. It participates in glycan degradation; xylan degradation. Functionally, hydrolyzes xylans into xylobiose and xylose. This chain is Bifunctional endo-1,4-beta-xylanase A (XYNA), found in Neocallimastix patriciarum (Rumen fungus).